A 150-amino-acid chain; its full sequence is Large ribosomal subunit protein bL9 (150 aa).

It belongs to the bacterial ribosomal protein bL9 family.

Functionally, binds to the 23S rRNA. This is Large ribosomal subunit protein bL9 from Corynebacterium efficiens (strain DSM 44549 / YS-314 / AJ 12310 / JCM 11189 / NBRC 100395).